The chain runs to 171 residues: Co-chaperone protein HscB (171 aa).

A J domain is found at D2 to L74.

Belongs to the HscB family. As to quaternary structure, interacts with HscA and stimulates its ATPase activity. Interacts with IscU.

Its function is as follows. Co-chaperone involved in the maturation of iron-sulfur cluster-containing proteins. Seems to help targeting proteins to be folded toward HscA. The polypeptide is Co-chaperone protein HscB (Klebsiella pneumoniae (strain 342)).